Reading from the N-terminus, the 207-residue chain is Uracil phosphoribosyltransferase (207 aa).

Residues Arg77, Arg102, and 129–137 (DPMLATGGS) each bind 5-phospho-alpha-D-ribose 1-diphosphate. Uracil is bound by residues Ile192 and 197-199 (GDA). 5-phospho-alpha-D-ribose 1-diphosphate is bound at residue Asp198.

The protein belongs to the UPRTase family. Mg(2+) serves as cofactor.

It carries out the reaction UMP + diphosphate = 5-phospho-alpha-D-ribose 1-diphosphate + uracil. Its pathway is pyrimidine metabolism; UMP biosynthesis via salvage pathway; UMP from uracil: step 1/1. Its activity is regulated as follows. Allosterically activated by GTP. Its function is as follows. Catalyzes the conversion of uracil and 5-phospho-alpha-D-ribose 1-diphosphate (PRPP) to UMP and diphosphate. In Dictyoglomus thermophilum (strain ATCC 35947 / DSM 3960 / H-6-12), this protein is Uracil phosphoribosyltransferase.